Consider the following 760-residue polypeptide: Cellulose synthase-like protein G1 (760 aa).

2 helical membrane passes run 28–48 and 54–74; these read IYAI…VHSL and TLIT…WATT. Residues Asp-142 and Asp-447 contribute to the active site. Helical transmembrane passes span 530 to 550, 558 to 578, 593 to 613, 656 to 676, and 680 to 700; these read IPLT…VSVF, FWLY…DFLL, LMIK…LKTL, VAIV…FCGG, and LELM…GAMV.

This sequence belongs to the glycosyltransferase 2 family. Plant cellulose synthase-like G subfamily. Expressed in young seedlings, primarily in the vascular tissue.

The protein localises to the golgi apparatus membrane. In terms of biological role, thought to be a Golgi-localized beta-glycan synthase that polymerize the backbones of noncellulosic polysaccharides (hemicelluloses) of plant cell wall. This Arabidopsis thaliana (Mouse-ear cress) protein is Cellulose synthase-like protein G1 (CSLG1).